A 139-amino-acid polypeptide reads, in one-letter code: Classical arabinogalactan protein 3 (139 aa).

An N-terminal signal peptide occupies residues 1–21; sequence MALKTLQALIFLGLFAASCLA. A Pyrrolidone carboxylic acid modification is found at glutamine 22. Residues 30 to 115 are disordered; it reads TFLPPVESPS…PAPRADGPVA (86 aa). 2 stretches are compositionally biased toward pro residues: residues 46 to 77 and 97 to 107; these read AEPP…PPTT and PSGPTPAPAPA. Aspartate 116 carries GPI-anchor amidated aspartate lipidation. Positions 117–139 are cleaved as a propeptide — removed in mature form; it reads SALTNKAFLVSTVIAGALYAVLA.

It belongs to the classical AGP family. O-glycosylated on the hydroxyproline residues. As to expression, expressed at a low level in roots.

The protein localises to the cell membrane. Its function is as follows. Proteoglycan that seems to be implicated in diverse developmental roles such as differentiation, cell-cell recognition, embryogenesis and programmed cell death. The chain is Classical arabinogalactan protein 3 (AGP3) from Arabidopsis thaliana (Mouse-ear cress).